Reading from the N-terminus, the 394-residue chain is MKVLCFGMGQAGGNVLDALLRYEQRTNADYVVDAVAYNTASADLRGLDLVPEENRILFGADEVSGHGVGADNELAAELAERDSRQLLRGTDGAPTSTADAFLIFAGLGGGTGSGAAPVLAKHLNRIYEQPIYGVGILPAADEGALYSRNAARSLKALVDVTDHVFAFDNGAWAESGEDVAQAHDTMNEVLVRRLGILFASGEVAESGTVAESVVDSSEVINTLRGGGISTIGYAASELPESDGGGGFSIKGLLGGDSSSTDELDSINRITTQTRKAVLGQLTLPCDVDSASRGLVVVSGPPEWLNRKAVERSRTWVEEQTGSMEVRGGDYPLSESNHVGVLVLLGDVSRSDRVAEIRSTAVEAEQNRRERIASDAADREDGTEAVVDDRLDSLF.

GTP-binding positions include 10 to 14 (QAGGN), 110 to 112 (GTG), Glu142, Asn169, and Asn187.

The protein belongs to the CetZ family.

The protein localises to the cytoplasm. Functionally, involved in cell shape control. In Haloferax volcanii (strain ATCC 29605 / DSM 3757 / JCM 8879 / NBRC 14742 / NCIMB 2012 / VKM B-1768 / DS2) (Halobacterium volcanii), this protein is Tubulin-like protein CetZ5.